The following is an 826-amino-acid chain: MAHTDTDDLVGLLDADDQNLDIPATLPMLPVRDVVVFTHMIIPLFVGRDKSVRAVDAAMAKDRFLFLATQMDGAVENPESDQIFKHGTAARILRVLKLPDGRVKVLVQGLAKAKIVRYTKKSDMFRVRIELLHEEDLGDLDMETEALMRNVKESCEKILGLRGELTPDVTMVLDGIDHPGRLADLVASNLNLKIEEAQSIFETIDPVQRLLAVNGFVSREVELSAMQARIQSSVRDEISKSQKDYFLREQMRAINRELGEMDEKTQEIKEYQDKIRKAKMPKEAKEEAERQLKRLEQMHPEAGEAPTVRTYLDWLVEVPWKKATKDTLDIKKAKEILEEDHYGLEKVKDRILEYLAVRKLNPKMKGPILCFVGPPGVGKTSLGKSIARAMGRKFYRLSLGGIRDEAEIRGHRRTYIGALPGRIIQGLKHCKSNNPVFMMDEIDKIGADFRGDPSSALLEALDPEQNFAFSDHYLNVPFDLSSVMFITTANMTDTIPSALLDRMEVINLAGYTENEKVLIAQQYLVPRQVKENGLKPEDITISGNALLKMATEYTSESGLRNLEREIGTLCRKVSRKIAEGKKGPYQITASSLVKYLGLEKFLPEMDQEEPQIGLATGLAWTHWGGEALYIETTLMRGKGELVLTGQLGEVMQESARAALSYARTNEDELEIDPDLFDNFDIHIHVPAGAIPKDGPSAGIAMTTALVSALTERPVANDIAMTGEVTIRGRVLPIGGLREKSLGALRAGIKTIIIPEKNKKELSEVPQQVRRKLKYITVSHVNEVLEKALLPAEKKKAPPKKKPPKKAAKPKAKKTQPKAKTTEAADK.

Positions L26–V221 constitute a Lon N-terminal domain. Residue G373–T380 participates in ATP binding. Residues E609–P790 enclose the Lon proteolytic domain. Active-site residues include S696 and K739. The disordered stretch occupies residues L788–K826. The span at A796 to P816 shows a compositional bias: basic residues.

Belongs to the peptidase S16 family. As to quaternary structure, homohexamer. Organized in a ring with a central cavity.

Its subcellular location is the cytoplasm. The catalysed reaction is Hydrolysis of proteins in presence of ATP.. Functionally, ATP-dependent serine protease that mediates the selective degradation of mutant and abnormal proteins as well as certain short-lived regulatory proteins. Required for cellular homeostasis and for survival from DNA damage and developmental changes induced by stress. Degrades polypeptides processively to yield small peptide fragments that are 5 to 10 amino acids long. Binds to DNA in a double-stranded, site-specific manner. The protein is Lon protease of Desulfatibacillum aliphaticivorans.